Consider the following 47-residue polypeptide: Lysis protein for colicin E8 (47 aa).

The signal sequence occupies residues Met1–Ala19. The N-palmitoyl cysteine moiety is linked to residue Cys20. A lipid anchor (S-diacylglycerol cysteine) is attached at Cys20.

The protein localises to the cell outer membrane. Its function is as follows. Lysis proteins are required for both colicin release and partial cell lysis. The protein is Lysis protein for colicin E8 (lys) of Escherichia coli.